Here is a 144-residue protein sequence, read N- to C-terminus: Benzoylsuccinyl-CoA thiolase subunit BbsA (144 aa).

Cys-40, Cys-43, Cys-54, and Cys-57 together coordinate Zn(2+).

It belongs to the BbsA family. Heterotetramer composed of two BbsA subunits and two BbsB subunits. BbsA forms homodimeric subcomplexes. Both BbsA and BbsB are essential for enzymatic activity.

The enzyme catalyses (S)-2-benzoylsuccinyl-CoA + CoA = benzoyl-CoA + succinyl-CoA. It participates in xenobiotic degradation; toluene degradation. Functionally, component of the BbsAB thiolase complex, which catalyzes the thiolytic cleavage of (S)-2-benzoylsuccinyl-CoA to succinyl-CoA and benzoyl-CoA, the final step of anaerobic toluene metabolism. The BbsA subunit critically contributes to an induced-fit process for productive binding of a CoA substrate into the active site of BbsB. In Thauera aromatica, this protein is Benzoylsuccinyl-CoA thiolase subunit BbsA.